The sequence spans 392 residues: Phosphoglycerate kinase (392 aa).

Substrate contacts are provided by residues 21–23, R36, 59–62, R118, and R151; these read DFN and HLGR. ATP contacts are provided by residues K201, G292, E323, and 349–352; that span reads GGDS.

Belongs to the phosphoglycerate kinase family. As to quaternary structure, monomer.

It localises to the cytoplasm. The enzyme catalyses (2R)-3-phosphoglycerate + ATP = (2R)-3-phospho-glyceroyl phosphate + ADP. It functions in the pathway carbohydrate degradation; glycolysis; pyruvate from D-glyceraldehyde 3-phosphate: step 2/5. In Borrelia hermsii (strain HS1 / DAH), this protein is Phosphoglycerate kinase.